A 291-amino-acid polypeptide reads, in one-letter code: MSMPLHQISAIPSQDAISARVYRSKTKEKEREEQNEKTLGHFMSHSSNISKAGSPPSASAPAPVSSFSRTSITPSSQDICRICHCEGDDESPLITPCHCTGSLHFVHQACLQQWIKSSDTRCCELCKYEFIMETKLKPLRKWEKLQMTSSERRKIMCSVTFHVIAITCVVWSLYVLIDRTAEEIKQGQATGILEWPFWTKLVVVAIGFTGGLLFMYVQCKVYVQLWKRLKAYNRVIYVQNCPETSKKNIFEKSPLTEPNFENKHGYGICHSDTNSSCCTEPEDTGAEIIHV.

Residues 22–72 (YRSKTKEKEREEQNEKTLGHFMSHSSNISKAGSPPSASAPAPVSSFSRTSI) are disordered. The span at 25–39 (KTKEKEREEQNEKTL) shows a compositional bias: basic and acidic residues. The span at 50 to 72 (SKAGSPPSASAPAPVSSFSRTSI) shows a compositional bias: low complexity. The segment at 72–133 (ITPSSQDICR…ELCKYEFIME (62 aa)) adopts an RING-CH-type zinc-finger fold. Zn(2+) is bound by residues C80, C83, C97, C99, H107, C110, C123, and C126. A run of 2 helical transmembrane segments spans residues 157–177 (CSVT…YVLI) and 197–217 (FWTK…FMYV). A Phosphoserine modification is found at S253.

In terms of assembly, interacts with CD86. In terms of tissue distribution, broadly expressed. Present in immature dendritic cells (at protein level).

The protein resides in the golgi apparatus membrane. The protein localises to the endoplasmic reticulum membrane. It is found in the cytoplasmic vesicle membrane. Its subcellular location is the lysosome membrane. It localises to the early endosome membrane. It carries out the reaction S-ubiquitinyl-[E2 ubiquitin-conjugating enzyme]-L-cysteine + [acceptor protein]-L-lysine = [E2 ubiquitin-conjugating enzyme]-L-cysteine + N(6)-ubiquitinyl-[acceptor protein]-L-lysine.. It functions in the pathway protein modification; protein ubiquitination. Functionally, E3 ubiquitin-protein ligase that plays several important roles in innate immunity and adaptive immunity. Mediates ubiquitination of CD86 and MHC class II proteins, such as HLA-DR alpha and beta, and promotes their subsequent endocytosis and sorting to lysosomes via multivesicular bodies. Possesses a very broad antiviral activity by specifically inactivating different viral fusion proteins. Targets and ubiquitinates cytoplasmic lysine residues of viral envelope glycoproteins with single transmembrane domains leading to their lysosomal degradation. Therefore, shows broad-spectrum inhibition against many viruses including retroviruses, rhabdoviruses, arenaviruses, sarbecoviruses or influenzaviruses. Strongly blocks human immunodeficiency virus type 1 envelope glycoprotein incorporation into virions by down-regulating its cell surface expression. Also blocks ebola virus glycoprotein/GP incorporation via surface down-regulation. Mediates 'Lys-63'-linked polyubiquitination of influenza M2 to target it to lysosome for degradation. Mediates the regulation of constitutive ubiquitination and trafficking of the viral restriction factor BST2 within the endocytic pathway. Plays a role in maintenance of immune tolerance to self by promoting the turnover and proteasomal degradation of PD-L1/CD274 via ubiquitination. Catalyzes the 'Lys-63'-linked polyubiquitylation of cGAS thereby inhibiting its DNA binding ability and impairing its antiviral innate immunity. Negatively regulates IL7-mediated T-cell homeostasis by mediating 'Lys-27'-linked polyubiquitination of IL7R, leading to its lysosomal degradation. (Microbial infection) Mediates 'Lys-63'-linked polyubiquitination of hepatitis C virus/HCV protein NS2 which allows its binding to HGS, an ESCRT-0 complex component, and this interaction is essential for HCV envelopment. This is E3 ubiquitin-protein ligase MARCHF8 from Homo sapiens (Human).